The chain runs to 272 residues: Hematopoietically-expressed homeobox protein hhex (272 aa).

Positions Arg137–Lys196 form a DNA-binding region, homeobox. Residues Cys222 to His272 form a disordered region. The span at Glu250–Ile261 shows a compositional bias: acidic residues.

As to expression, first expressed in the dorsal endomesoderm of the gastrula stage embryo. The dorsal endomesoderm contributes to forming the embryonic liver, and expression continues in the liver throughout development. Also expressed in precursors of the developing thyroid gland, and beginning at the tailbud stage, expressed in the ventral region of the head. Also transiently expressed in the endothelial layer of developing vascular tissues of the embryo, beginning at the tailbud stages.

Its subcellular location is the nucleus. Its function is as follows. Recognizes the DNA sequence 5'-ATTAA-3'. Transcriptional repressor. Regulates the differentiation of both endothelial and blood cells. Probably plays a role in the proliferation of vascular endothelial cells during blood vessel development. Establishes anterior identity at two levels; acts early to enhance canonical wnt-signaling by repressing expression of tle4, and acts later to inhibit nodal-signaling by directly targeting nodal/nr1 and nodal2/nr2. May play a role in liver development. Induces heart development. In Xenopus laevis (African clawed frog), this protein is Hematopoietically-expressed homeobox protein hhex.